A 296-amino-acid chain; its full sequence is Phosphoribosylaminoimidazole-succinocarboxamide synthase (296 aa).

It belongs to the SAICAR synthetase family.

The enzyme catalyses 5-amino-1-(5-phospho-D-ribosyl)imidazole-4-carboxylate + L-aspartate + ATP = (2S)-2-[5-amino-1-(5-phospho-beta-D-ribosyl)imidazole-4-carboxamido]succinate + ADP + phosphate + 2 H(+). It functions in the pathway purine metabolism; IMP biosynthesis via de novo pathway; 5-amino-1-(5-phospho-D-ribosyl)imidazole-4-carboxamide from 5-amino-1-(5-phospho-D-ribosyl)imidazole-4-carboxylate: step 1/2. This is Phosphoribosylaminoimidazole-succinocarboxamide synthase from Trichlorobacter lovleyi (strain ATCC BAA-1151 / DSM 17278 / SZ) (Geobacter lovleyi).